Reading from the N-terminus, the 89-residue chain is Probable spanin, outer lipoprotein subunit (89 aa).

Polar residues predominate over residues 1 to 10; the sequence is MPPCSATSRR. Residues 1–21 are disordered; that stretch reads MPPCSATSRRSLPGPTPSARR. The N-terminal stretch at 1 to 47 is a signal peptide; that stretch reads MPPCSATSRRSLPGPTPSARRWTVPWTRTARGLTGLCLLLSLTACAT.

In terms of assembly, interacts (via C-terminus) with the spanin inner membrane subunit (via C-terminus). Part of the spanin complex which spans the entire periplasmic space. The spanin complex is composed of spanin inner membrane subunit and spanin outer membrane subunit.

It is found in the host cell outer membrane. In terms of biological role, component of the spanin complex that disrupts the host outer membrane and participates in cell lysis during virus exit. The spanin complex conducts the final step in host lysis by disrupting the outer membrane after holin and endolysin action have permeabilized the inner membrane and degraded the host peptidoglycans. Host outer membrane disruption is possibly due to local fusion between the inner and outer membrane performed by the spanin complex. The polypeptide is Probable spanin, outer lipoprotein subunit (Pseudomonas aeruginosa).